A 389-amino-acid polypeptide reads, in one-letter code: uncharacterized protein (389 aa).

WD repeat units follow at residues 11–53 (SFGS…QKIK), 146–186 (SHHD…EEDA), and 289–330 (AHGD…LDIP). Ser-351 carries the phosphoserine modification. The disordered stretch occupies residues 361–389 (QKESVSTRPRKEKHKKAKKHSMKSRFKPY). Positions 368-389 (RPRKEKHKKAKKHSMKSRFKPY) are enriched in basic residues.

This is an uncharacterized protein from Saccharomyces cerevisiae (strain ATCC 204508 / S288c) (Baker's yeast).